Here is a 99-residue protein sequence, read N- to C-terminus: Acylphosphatase (99 aa).

Positions 5–97 (VRQVTVQGRV…RPGERFSTLP (93 aa)) constitute an Acylphosphatase-like domain. Catalysis depends on residues Arg20 and Asn38.

Belongs to the acylphosphatase family.

It catalyses the reaction an acyl phosphate + H2O = a carboxylate + phosphate + H(+). The protein is Acylphosphatase (acyP) of Rhodopseudomonas palustris (strain BisB18).